A 488-amino-acid chain; its full sequence is TOX high mobility group box family member 2 (488 aa).

A required for transcriptional activation region spans residues 76–114; that stretch reads YEIPPITPPNLPEPSLLHLGDHEASYHSLCHGLTPNGLL. Disordered regions lie at residues 192–258, 293–328, and 363–473; these read RSSI…PQKP, WDSL…KQPM, and SLLP…ECGI. Positions 204–216 are enriched in low complexity; the sequence is GSKSATPSPSSST. Positions 222–239 are enriched in basic and acidic residues; that stretch reads EVHFKISGEKRPSADPGK. Residues 223–252 carry the Nuclear localization signal motif; sequence VHFKISGEKRPSADPGKKAKNPKKKKKKDP. Residues 240–250 are compositionally biased toward basic residues; it reads KAKNPKKKKKK. Residues 255–323 constitute a DNA-binding region (HMG box); it reads PQKPVSAYAL…QANPPAKMLP (69 aa). The segment covering 302 to 316 has biased composition (polar residues); the sequence is QSSPDQGETKSTQAN. A compositionally biased stretch (low complexity) spans 443 to 460; the sequence is PSSSGSCSPGPSNPTSSG.

The protein localises to the nucleus. Putative transcriptional activator involved in the hypothalamo-pituitary-gonadal system. The sequence is that of TOX high mobility group box family member 2 (TOX2) from Homo sapiens (Human).